Here is a 302-residue protein sequence, read N- to C-terminus: Putative gluconeogenesis factor (302 aa).

Belongs to the gluconeogenesis factor family.

It is found in the cytoplasm. Required for morphogenesis under gluconeogenic growth conditions. This is Putative gluconeogenesis factor (ybhK) from Escherichia coli O157:H7.